Reading from the N-terminus, the 252-residue chain is Glucosamine-6-phosphate deaminase (252 aa).

The active-site Proton acceptor; for enolization step is the Asp-67. Asn-137 functions as the For ring-opening step in the catalytic mechanism. His-139 serves as the catalytic Proton acceptor; for ring-opening step. Residue Glu-144 is the For ring-opening step of the active site.

It belongs to the glucosamine/galactosamine-6-phosphate isomerase family. NagB subfamily.

The catalysed reaction is alpha-D-glucosamine 6-phosphate + H2O = beta-D-fructose 6-phosphate + NH4(+). It participates in amino-sugar metabolism; N-acetylneuraminate degradation; D-fructose 6-phosphate from N-acetylneuraminate: step 5/5. In terms of biological role, catalyzes the reversible isomerization-deamination of glucosamine 6-phosphate (GlcN6P) to form fructose 6-phosphate (Fru6P) and ammonium ion. This Staphylococcus aureus (strain bovine RF122 / ET3-1) protein is Glucosamine-6-phosphate deaminase.